A 615-amino-acid chain; its full sequence is Sodium-coupled neutral amino acid transporter 9 homolog (615 aa).

Residues 1–165 are Cytoplasmic-facing; the sequence is MPPFFAEFTE…LKDVSGKQGS (165 aa). The tract at residues 41 to 65 is disordered; that stretch reads VDDNDTDPLLDDEPPRRLPPAGGVP. Over residues 42–52 the composition is skewed to acidic residues; that stretch reads DDNDTDPLLDD. The chain crosses the membrane as a helical span at residues 166-186; the sequence is IVTIFSIWNTMMGTSLLAMPW. Residues 175–180 form an important for arginine binding and amino acid transport region; the sequence is TMMGTS. Residues 187–192 are Lumenal-facing; the sequence is ALQQAG. A helical membrane pass occupies residues 193–213; that stretch reads LVLGIIIMLSMAAICFYTAYI. Over 214 to 246 the chain is Cytoplasmic; that stretch reads VIESPKRLQDLSVDPLLAEFSDVCKSLFGRIGE. Residues 247 to 273 form a helical membrane-spanning segment; sequence YCAVVFSVCVLIGGVIVYWVLMSNFLY. The Lumenal portion of the chain corresponds to 274–341; it reads YTGAVVYESM…TGDDSWSFDK (68 aa). N-linked (GlcNAc...) asparagine glycosylation is found at asparagine 286 and asparagine 295. A disulfide bond links cysteine 304 and cysteine 478. The chain crosses the membrane as a helical span at residues 342–358; the sequence is FWTLRGTVPIYLAFALF. Residues 359-367 lie on the Cytoplasmic side of the membrane; the sequence is PLMNFKSPT. A helical transmembrane segment spans residues 368-392; the sequence is FFTKFNVLGTISVMYLLMFVFSKLL. Topologically, residues 393 to 413 are lumenal; that stretch reads ECGVNMDFSNPKSIHYVQLAN. The helical transmembrane segment at 414 to 434 threads the bilayer; sequence MHFPALSGTLTLSYFIHNAVL. At 435–451 the chain is on the cytoplasmic side; that stretch reads TILRNQKHPENNARDLS. A helical transmembrane segment spans residues 452 to 472; the sequence is IGYCLVAFCYVFIGFTFFAAF. Over 473–491 the chain is Lumenal; it reads PVQRSCISDNFLNNFGAGD. A helical transmembrane segment spans residues 492 to 512; that stretch reads VLSSTARLFLLFQMITVLPLL. Residues 513-533 lie on the Cytoplasmic side of the membrane; the sequence is MFLVRSQLFYAIFGQTWPGAI. A helical membrane pass occupies residues 534–554; that stretch reads RVIILNVLLIAVAVGFATFYP. At 555–561 the chain is on the lumenal side; the sequence is NVGSILR. Residues 562-582 traverse the membrane as a helical segment; the sequence is YVGSISGLVYVFALPAMVYIK. Residues 583 to 594 are Cytoplasmic-facing; that stretch reads QSEAAGTLTPMK. A helical transmembrane segment spans residues 595-615; the sequence is KYAHYGIIVIGVANLIAQFVI.

It belongs to the amino acid/polyamine transporter 2 family. SLC38A9 subfamily.

It localises to the lysosome membrane. Its subcellular location is the late endosome membrane. Amino acid transport is sodium-dependent. Transport of leucine, tyrosine and phenylalanine is increased by arginine binding. In terms of biological role, lysosomal amino acid transporter involved in the activation of mTORC1 in response to amino acid levels. Probably acts as an amino acid sensor of the Rag GTPases and Ragulator complexes, 2 complexes involved in amino acid sensing and activation of mTORC1, a signaling complex promoting cell growth in response to growth factors, energy levels, and amino acids. The sequence is that of Sodium-coupled neutral amino acid transporter 9 homolog from Caenorhabditis elegans.